A 232-amino-acid chain; its full sequence is Caffeoyl-CoA O-methyltransferase (232 aa).

Lys6 contributes to the substrate binding site. Residues Thr48, Glu70, 72-73 (GV), Ser78, Asp96, and Ala125 contribute to the S-adenosyl-L-methionine site. Asp148 is a binding site for substrate. Position 148 (Asp148) interacts with a divalent metal cation. Residue Asp150 coordinates S-adenosyl-L-methionine. The a divalent metal cation site is built by Asp174 and Asn175. Position 179 (Asn179) interacts with substrate.

The protein belongs to the class I-like SAM-binding methyltransferase superfamily. Cation-dependent O-methyltransferase family. CCoAMT subfamily. A divalent metal cation serves as cofactor.

The enzyme catalyses (E)-caffeoyl-CoA + S-adenosyl-L-methionine = (E)-feruloyl-CoA + S-adenosyl-L-homocysteine + H(+). The protein operates within aromatic compound metabolism; phenylpropanoid biosynthesis. In terms of biological role, methylates caffeoyl-CoA to feruloyl-CoA and 5-hydroxyferuloyl-CoA to sinapoyl-CoA. Plays a role in the synthesis of feruloylated polysaccharides. Involved in the reinforcement of the plant cell wall. Also involved in the responding to wounding or pathogen challenge by the increased formation of cell wall-bound ferulic acid polymers. This Citrus natsudaidai (Natsudaidai orange) protein is Caffeoyl-CoA O-methyltransferase.